Reading from the N-terminus, the 321-residue chain is MQGHVTDQQTRLSEALKRRAAEEGFNPVGIARIPGSPRLQLRTKALQRWLDHGHQADMAWMAAPRRRDPRLLLDGANSVLAVGLNYYVDAQPSPGSLKVARYGWGRDYHRVVDQRLRRIGRWLSEQRPDCGWRACVDATPLLDKAWAEEAGLGWIGKHSNLIHPERGSWMVIGHLLTTEPLNADPPARSLCGRCSACIDACPTHAIREPFVVDARRCLAFHTIENREDDLPENIRAALGSWVAGCDICQDVCPWNHRSLPQSNDPDMQPRPWLLNLHKEEIQTWDDSVWEQKLRGSALRRIKPWMWRRNAAAAQPDPTPTL.

The active-site Proton donor is the Asp137. Positions 179–211 (EPLNADPPARSLCGRCSACIDACPTHAIREPFV) constitute a 4Fe-4S ferredoxin-type domain. The [4Fe-4S] cluster site is built by Cys191, Cys194, Cys197, Cys201, Cys217, Cys245, Cys248, and Cys252.

This sequence belongs to the QueG family. Monomer. Requires cob(II)alamin as cofactor. [4Fe-4S] cluster serves as cofactor.

Its subcellular location is the cytoplasm. It catalyses the reaction epoxyqueuosine(34) in tRNA + AH2 = queuosine(34) in tRNA + A + H2O. The protein operates within tRNA modification; tRNA-queuosine biosynthesis. Catalyzes the conversion of epoxyqueuosine (oQ) to queuosine (Q), which is a hypermodified base found in the wobble positions of tRNA(Asp), tRNA(Asn), tRNA(His) and tRNA(Tyr). This is Epoxyqueuosine reductase from Synechococcus sp. (strain CC9605).